The chain runs to 222 residues: Cytidylate kinase (222 aa).

11–19 is an ATP binding site; it reads GPAGAGKST.

This sequence belongs to the cytidylate kinase family. Type 1 subfamily.

It localises to the cytoplasm. It carries out the reaction CMP + ATP = CDP + ADP. It catalyses the reaction dCMP + ATP = dCDP + ADP. The chain is Cytidylate kinase from Desulforamulus reducens (strain ATCC BAA-1160 / DSM 100696 / MI-1) (Desulfotomaculum reducens).